The primary structure comprises 445 residues: MSETTLNAAEQPIDELVSWVKQHDFSLNLTTERLAFLIAIAVLSNERFDEELGEGELHDAFTIVTRLFEETGEASAFRANNAINELVKQRLISRFTSEMTEGASIYRLSPLAIGITDYYVRHREFSKLRLSIQLSMVAGEMAKAIEAAKQGGTAGHWKKNVYAVLKYSVGEIFDQIDLNQRVMDEQQQSVKQQIADLLNKDWREAINNCESLLSETSNTLKELQDTLQAAGDELQTQILDIQELVYGDEELEFIEETLFGLQMKLDRITSWGQQAIDLWIGYDRHVHKFIRTAIDMDKNRIFSTRLRQSVKDYFDMPWYLTYADAERLSDLRDEALVLRDDEVTGQVPLEVEYEEFQQVNDELAERIGEMLRLHKDNGKPIDLGIVLKDYLAQHPRTHHFDLARIVIDQAVRMGYSESDYQAIQPDWQAINDYGAKVQANVIDRY.

Residues 213 to 241 (LSETSNTLKELQDTLQAAGDELQTQILDI) form a leucine-zipper region.

This sequence belongs to the MukF family. As to quaternary structure, interacts, and probably forms a ternary complex, with MukE and MukB via its C-terminal region. The complex formation is stimulated by calcium or magnesium. It is required for an interaction between MukE and MukB.

The protein localises to the cytoplasm. Its subcellular location is the nucleoid. In terms of biological role, involved in chromosome condensation, segregation and cell cycle progression. May participate in facilitating chromosome segregation by condensation DNA from both sides of a centrally located replisome during cell division. Not required for mini-F plasmid partitioning. Probably acts via its interaction with MukB and MukE. Overexpression results in anucleate cells. It has a calcium binding activity. In Vibrio vulnificus (strain YJ016), this protein is Chromosome partition protein MukF.